The following is a 242-amino-acid chain: UPF0246 protein SPCG_1533 (242 aa).

It belongs to the UPF0246 family.

The protein is UPF0246 protein SPCG_1533 of Streptococcus pneumoniae (strain CGSP14).